A 291-amino-acid polypeptide reads, in one-letter code: Cilia- and flagella-associated protein 298 (291 aa).

Belongs to the CFAP298 family.

The protein is Cilia- and flagella-associated protein 298 of Drosophila melanogaster (Fruit fly).